A 307-amino-acid polypeptide reads, in one-letter code: Malonyl-[acyl-carrier protein] O-methyltransferase (307 aa).

Belongs to the methyltransferase superfamily.

It carries out the reaction malonyl-[ACP] + S-adenosyl-L-methionine = malonyl-[ACP] methyl ester + S-adenosyl-L-homocysteine. It functions in the pathway cofactor biosynthesis; biotin biosynthesis. Functionally, converts the free carboxyl group of a malonyl-thioester to its methyl ester by transfer of a methyl group from S-adenosyl-L-methionine (SAM). It allows to synthesize pimeloyl-ACP via the fatty acid synthetic pathway. This is Malonyl-[acyl-carrier protein] O-methyltransferase from Nitrosospira multiformis (strain ATCC 25196 / NCIMB 11849 / C 71).